Consider the following 202-residue polypeptide: Orotate phosphoribosyltransferase (202 aa).

5-phospho-alpha-D-ribose 1-diphosphate is bound by residues K93 and 113 to 121 (EDIITTGGS). Orotate contacts are provided by T117 and R145.

This sequence belongs to the purine/pyrimidine phosphoribosyltransferase family. PyrE subfamily. As to quaternary structure, homodimer. Requires Mg(2+) as cofactor.

The enzyme catalyses orotidine 5'-phosphate + diphosphate = orotate + 5-phospho-alpha-D-ribose 1-diphosphate. It functions in the pathway pyrimidine metabolism; UMP biosynthesis via de novo pathway; UMP from orotate: step 1/2. Functionally, catalyzes the transfer of a ribosyl phosphate group from 5-phosphoribose 1-diphosphate to orotate, leading to the formation of orotidine monophosphate (OMP). The protein is Orotate phosphoribosyltransferase of Campylobacter fetus subsp. fetus (strain 82-40).